The chain runs to 374 residues: Beta sliding clamp (374 aa).

It belongs to the beta sliding clamp family. Forms a ring-shaped head-to-tail homodimer around DNA which binds and tethers DNA polymerases and other proteins to the DNA. The DNA replisome complex has a single clamp-loading complex (3 tau and 1 each of delta, delta', psi and chi subunits) which binds 3 Pol III cores (1 core on the leading strand and 2 on the lagging strand) each with a beta sliding clamp dimer. Additional proteins in the replisome are other copies of gamma, psi and chi, Ssb, DNA helicase and RNA primase.

Its subcellular location is the cytoplasm. In terms of biological role, confers DNA tethering and processivity to DNA polymerases and other proteins. Acts as a clamp, forming a ring around DNA (a reaction catalyzed by the clamp-loading complex) which diffuses in an ATP-independent manner freely and bidirectionally along dsDNA. Initially characterized for its ability to contact the catalytic subunit of DNA polymerase III (Pol III), a complex, multichain enzyme responsible for most of the replicative synthesis in bacteria; Pol III exhibits 3'-5' exonuclease proofreading activity. The beta chain is required for initiation of replication as well as for processivity of DNA replication. This Helicobacter pylori (strain J99 / ATCC 700824) (Campylobacter pylori J99) protein is Beta sliding clamp (dnaN).